The sequence spans 551 residues: Probable malate:quinone oxidoreductase (551 aa).

The span at 525-544 shows a compositional bias: low complexity; it reads QTAAAAPQAQPQLKPQPDAK. Positions 525-551 are disordered; sequence QTAAAAPQAQPQLKPQPDAKPVADIAL.

Belongs to the MQO family. It depends on FAD as a cofactor.

The catalysed reaction is (S)-malate + a quinone = a quinol + oxaloacetate. The protein operates within carbohydrate metabolism; tricarboxylic acid cycle; oxaloacetate from (S)-malate (quinone route): step 1/1. The sequence is that of Probable malate:quinone oxidoreductase from Enterobacter sp. (strain 638).